The primary structure comprises 152 residues: Orientotoxin-1 (152 aa).

As to expression, expressed by the venom gland.

The protein localises to the secreted. The enzyme catalyses a 1-acyl-sn-glycero-3-phosphocholine + H2O = sn-glycerol 3-phosphocholine + a fatty acid + H(+). Neurotoxin of presynaptic effect which degrades lysophospholipids. This is Orientotoxin-1 from Vespa orientalis (Oriental hornet).